Here is an 854-residue protein sequence, read N- to C-terminus: MGRLLIKILIIAIGISIGIGNLYVTVFYGIPVWKNSTVQAFCMTPNTNMWATTNCIPDDHDNTEVPLNITEAFEAWDNPLVKQAESNIHLLFEQTMRPCVKLSPICIKMSCVELNGTATTKATTTATTTMTTPCQNCSTEQIEGEMAEEPASNCTFAIAGYQRDVKKNYSMTWYDQELVCNNKTGSEKGSKDCYMIHCNDSVIKEACDKTYWDTLRVRYCAPAGYALLKCNDKDYRGFAPKCKNVSVVHCTRLINTTITTGIGLNGSRSENRTEIWQKGGNDNDTVIIKLNKFYNLTVRCRRPGNKTVLPVTIMAGLVFHSQKYNTRLKQAWCHFQGDWKGAWKEVREEVKKVKNLTEVSIENIHLRRIWGDPESANFWFNCQGEFFYCKMDWFINYLNNRTEDAEGTNRTCDKGKPGPGPCVQRTYVACHIRQVVNDWYTVSKKVYAPPREGHLECNSSVTALYVAIDYNNKSGPINVTLSPQVRSIWAYELGDYKLVEITPIGFAPTDVRRYTGPTREKRVPFVLGFLGFLGAAGTAMGAAATTLTVQSRHLLAGILQQQKNLLAAVEQQQQLLKLTIWGVKNLNARVTALEKYLEDQARLNSWGCAWKQVCHTTVPWKYNNTPKWDNMTWLEWERQINALEGNITQLLEEAQNQESKNLDLYQKLDDWSGFWSWFSLSTWLGYVKIGFLVIVIILGLRFAWVLWGCIRNIRQGYNPLPQIHIHSSAERPDNGGGQDRGGESSSSKLIRLQEESSTPSRINNWWLNFKSCSLRIRTWCYNICLTLLIFIRTAVGYLQYGLQQLQEAATGLAQALARAAREAWGRLGAIVRSAYRAVINSPRRVRQGLEKVLG.

The first 20 residues, 1–20 (MGRLLIKILIIAIGISIGIG), serve as a signal peptide directing secretion. The Extracellular segment spans residues 21 to 705 (NLYVTVFYGI…IILGLRFAWV (685 aa)). Asn-35 carries N-linked (GlcNAc...) asparagine; by host glycosylation. A disulfide bridge links Cys-42 with Cys-55. Asn-68, Asn-115, Asn-136, Asn-153, Asn-168, Asn-182, and Asn-199 each carry an N-linked (GlcNAc...) asparagine; by host glycan. 5 cysteine pairs are disulfide-bonded: Cys-99-Cys-207, Cys-106-Cys-198, Cys-111-Cys-154, Cys-220-Cys-250, and Cys-230-Cys-242. Residues 111 to 153 (CVELNGTATTKATTTATTTMTTPCQNCSTEQIEGEMAEEPASN) are V1. Residues 154–198 (CTFAIAGYQRDVKKNYSMTWYDQELVCNNKTGSEKGSKDCYMIHC) are V2. 13 N-linked (GlcNAc...) asparagine; by host glycosylation sites follow: Asn-244, Asn-255, Asn-265, Asn-271, Asn-283, Asn-295, Asn-305, Asn-355, Asn-400, Asn-409, Asn-458, Asn-472, and Asn-478. The segment at 300 to 332 (CRRPGNKTVLPVTIMAGLVFHSQKYNTRLKQAW) is V3. Cys-300 and Cys-333 are joined by a disulfide. Cystine bridges form between Cys-382/Cys-457 and Cys-389/Cys-430. The interval 389 to 430 (CKMDWFINYLNNRTEDAEGTNRTCDKGKPGPGPCVQRTYVAC) is V4. Residues 473-481 (KSGPINVTL) form a V5 region. The segment at 523–543 (VPFVLGFLGFLGAAGTAMGAA) is fusion peptide. Residues 586–602 (LNARVTALEKYLEDQAR) are immunosuppression. Residues Asn-630 and Asn-646 are each glycosylated (N-linked (GlcNAc...) asparagine; by host). Positions 633–672 (WLEWERQINALEGNITQLLEEAQNQESKNLDLYQKLDDWS) form a coiled coil. Positions 667–688 (KLDDWSGFWSWFSLSTWLGYVK) are MPER; binding to GalCer. A helical membrane pass occupies residues 706 to 726 (LWGCIRNIRQGYNPLPQIHIH). The YXXL motif; contains endocytosis signal motif lies at 717-720 (YNPL). The Cytoplasmic segment spans residues 727–854 (SSAERPDNGG…VRQGLEKVLG (128 aa)).

The mature envelope protein (Env) consists of a homotrimer of non-covalently associated gp120-gp41 heterodimers. The resulting complex protrudes from the virus surface as a spike. Interacts with host CD4 and CCR5. Gp120 also interacts with the C-type lectins CD209/DC-SIGN and CLEC4M/DC-SIGNR (collectively referred to as DC-SIGN(R)). As to quaternary structure, the mature envelope protein (Env) consists of a homotrimer of non-covalently associated gp120-gp41 heterodimers. The resulting complex protrudes from the virus surface as a spike. Post-translationally, specific enzymatic cleavages in vivo yield mature proteins. Envelope glycoproteins are synthesized as an inactive precursor that is heavily N-glycosylated and processed likely by host cell furin in the Golgi to yield the mature SU and TM proteins. The cleavage site between SU and TM requires the minimal sequence [KR]-X-[KR]-R.

The protein resides in the virion membrane. Its subcellular location is the host cell membrane. The protein localises to the host endosome membrane. The surface protein gp120 (SU) attaches the virus to the host lymphoid cell by binding to the primary receptor CD4. This interaction induces a structural rearrangement creating a high affinity binding site for a chemokine coreceptor like CCR5. This peculiar 2 stage receptor-interaction strategy allows gp120 to maintain the highly conserved coreceptor-binding site in a cryptic conformation, protected from neutralizing antibodies. These changes are transmitted to the transmembrane protein gp41 and are thought to activate its fusogenic potential by unmasking its fusion peptide. In terms of biological role, surface protein gp120 (SU) may target the virus to gut-associated lymphoid tissue (GALT) by binding host ITGA4/ITGB7 (alpha-4/beta-7 integrins), a complex that mediates T-cell migration to the GALT. Interaction between gp120 and ITGA4/ITGB7 would allow the virus to enter GALT early in the infection, infecting and killing most of GALT's resting CD4+ T-cells. This T-cell depletion is believed to be the major insult to the host immune system leading to AIDS. Functionally, the surface protein gp120 is a ligand for CD209/DC-SIGN and CLEC4M/DC-SIGNR, which are respectively found on dendritic cells (DCs), and on endothelial cells of liver sinusoids and lymph node sinuses. These interactions allow capture of viral particles at mucosal surfaces by these cells and subsequent transmission to permissive cells. DCs are professional antigen presenting cells, critical for host immunity by inducing specific immune responses against a broad variety of pathogens. They act as sentinels in various tissues where they take up antigen, process it, and present it to T-cells following migration to lymphoid organs. SIV subverts the migration properties of dendritic cells to gain access to CD4+ T-cells in lymph nodes. Virus transmission to permissive T-cells occurs either in trans (without DCs infection, through viral capture and transmission), or in cis (following DCs productive infection, through the usual CD4-gp120 interaction), thereby inducing a robust infection. In trans infection, bound virions remain infectious over days and it is proposed that they are not degraded, but protected in non-lysosomal acidic organelles within the DCs close to the cell membrane thus contributing to the viral infectious potential during DCs' migration from the periphery to the lymphoid tissues. On arrival at lymphoid tissues, intact virions recycle back to DCs' cell surface allowing virus transmission to CD4+ T-cells. Virion capture also seems to lead to MHC-II-restricted viral antigen presentation, and probably to the activation of SIV-specific CD4+ cells. Its function is as follows. The transmembrane protein gp41 (TM) acts as a class I viral fusion protein. Under the current model, the protein has at least 3 conformational states: pre-fusion native state, pre-hairpin intermediate state, and post-fusion hairpin state. During fusion of viral and target intracellular membranes, the coiled coil regions (heptad repeats) assume a trimer-of-hairpins structure, positioning the fusion peptide in close proximity to the C-terminal region of the ectodomain. The formation of this structure appears to drive apposition and subsequent fusion of viral and target cell membranes. Complete fusion occurs in host cell endosomes. The virus undergoes clathrin-dependent internalization long before endosomal fusion, thus minimizing the surface exposure of conserved viral epitopes during fusion and reducing the efficacy of inhibitors targeting these epitopes. Membranes fusion leads to delivery of the nucleocapsid into the cytoplasm. The envelope glycoprotein gp160 precursor down-modulates cell surface CD4 antigen by interacting with it in the endoplasmic reticulum and blocking its transport to the cell surface. In terms of biological role, the gp120-gp41 heterodimer allows rapid transcytosis of the virus through CD4 negative cells such as simple epithelial monolayers of the intestinal, rectal and endocervical epithelial barriers. Both gp120 and gp41 specifically recognize glycosphingolipids galactosyl-ceramide (GalCer) or 3' sulfo-galactosyl-ceramide (GalS) present in the lipid rafts structures of epithelial cells. Binding to these alternative receptors allows the rapid transcytosis of the virus through the epithelial cells. This transcytotic vesicle-mediated transport of virions from the apical side to the basolateral side of the epithelial cells does not involve infection of the cells themselves. This chain is Envelope glycoprotein gp160 (env), found in Cercopithecidae (Old World monkeys).